The primary structure comprises 272 residues: Undecaprenyl-diphosphatase (272 aa).

8 consecutive transmembrane segments (helical) span residues 6 to 26 (SLLV…LPVS), 45 to 65 (AKTF…VMFW), 89 to 109 (LSLI…LVFH), 115 to 135 (LFNP…LIIA), 156 to 176 (AFFI…RSGA), 189 to 209 (YAAS…ATAL), 221 to 241 (ADLP…LVAI), and 251 to 271 (ISFI…FAVF).

It belongs to the UppP family.

The protein localises to the cell inner membrane. It carries out the reaction di-trans,octa-cis-undecaprenyl diphosphate + H2O = di-trans,octa-cis-undecaprenyl phosphate + phosphate + H(+). Its function is as follows. Catalyzes the dephosphorylation of undecaprenyl diphosphate (UPP). Confers resistance to bacitracin. This is Undecaprenyl-diphosphatase from Cronobacter sakazakii (strain ATCC BAA-894) (Enterobacter sakazakii).